Consider the following 158-residue polypeptide: NAD(P)H-quinone oxidoreductase subunit N (158 aa).

The protein belongs to the complex I NdhN subunit family. As to quaternary structure, NDH-1 can be composed of about 15 different subunits; different subcomplexes with different compositions have been identified which probably have different functions.

It is found in the cellular thylakoid membrane. The enzyme catalyses a plastoquinone + NADH + (n+1) H(+)(in) = a plastoquinol + NAD(+) + n H(+)(out). It carries out the reaction a plastoquinone + NADPH + (n+1) H(+)(in) = a plastoquinol + NADP(+) + n H(+)(out). Its function is as follows. NDH-1 shuttles electrons from an unknown electron donor, via FMN and iron-sulfur (Fe-S) centers, to quinones in the respiratory and/or the photosynthetic chain. The immediate electron acceptor for the enzyme in this species is believed to be plastoquinone. Couples the redox reaction to proton translocation, and thus conserves the redox energy in a proton gradient. Cyanobacterial NDH-1 also plays a role in inorganic carbon-concentration. This chain is NAD(P)H-quinone oxidoreductase subunit N, found in Cyanothece sp. (strain PCC 7425 / ATCC 29141).